Consider the following 127-residue polypeptide: Fluoride-specific ion channel FluC (127 aa).

4 consecutive transmembrane segments (helical) span residues 4 to 24 (LLLA…FLSM), 35 to 55 (LGTL…LAWF), 71 to 91 (TGFC…VFLL), and 103 to 123 (IAVN…LFSA). The Na(+) site is built by glycine 75 and threonine 78.

This sequence belongs to the fluoride channel Fluc/FEX (TC 1.A.43) family.

It localises to the cell inner membrane. The enzyme catalyses fluoride(in) = fluoride(out). Its activity is regulated as follows. Na(+) is not transported, but it plays an essential structural role and its presence is essential for fluoride channel function. In terms of biological role, fluoride-specific ion channel. Important for reducing fluoride concentration in the cell, thus reducing its toxicity. In Enterobacter sp. (strain 638), this protein is Fluoride-specific ion channel FluC.